A 167-amino-acid polypeptide reads, in one-letter code: Lipoprotein signal peptidase (167 aa).

Helical transmembrane passes span 8-28 (TFLTSFLLVSLDWVSKLVVLL), 46-66 (WGHFSFLIVPSFNEGAAFGLF), 70-90 (KIPLLIFRVFVILCLFLFLGI), and 101-121 (IALTLILAGALGNVGDILFHG). Catalysis depends on residues Asp-125 and Asp-143. A helical membrane pass occupies residues 139-159 (FNLADAFISLGTLLLVGHLYF).

The protein belongs to the peptidase A8 family.

The protein localises to the cell inner membrane. The enzyme catalyses Release of signal peptides from bacterial membrane prolipoproteins. Hydrolyzes -Xaa-Yaa-Zaa-|-(S,diacylglyceryl)Cys-, in which Xaa is hydrophobic (preferably Leu), and Yaa (Ala or Ser) and Zaa (Gly or Ala) have small, neutral side chains.. It participates in protein modification; lipoprotein biosynthesis (signal peptide cleavage). In terms of biological role, this protein specifically catalyzes the removal of signal peptides from prolipoproteins. In Chlamydia muridarum (strain MoPn / Nigg), this protein is Lipoprotein signal peptidase.